A 340-amino-acid chain; its full sequence is Ketol-acid reductoisomerase (NADP(+)) (340 aa).

The 181-residue stretch at 3 to 183 (INVFYDKDCN…GGGRTGIIET (181 aa)) folds into the KARI N-terminal Rossmann domain. NADP(+) contacts are provided by residues 26 to 29 (FGSQ), arginine 49, serine 54, and 84 to 87 (DENQ). Residue histidine 109 is part of the active site. Glycine 135 lines the NADP(+) pocket. In terms of domain architecture, KARI C-terminal knotted spans 184–329 (TFKDETETDL…VKLRNMMPWI (146 aa)). Mg(2+)-binding residues include aspartate 192, glutamate 196, glutamate 228, and glutamate 232. Substrate is bound at residue serine 253.

The protein belongs to the ketol-acid reductoisomerase family. Mg(2+) serves as cofactor.

The enzyme catalyses (2R)-2,3-dihydroxy-3-methylbutanoate + NADP(+) = (2S)-2-acetolactate + NADPH + H(+). The catalysed reaction is (2R,3R)-2,3-dihydroxy-3-methylpentanoate + NADP(+) = (S)-2-ethyl-2-hydroxy-3-oxobutanoate + NADPH + H(+). It participates in amino-acid biosynthesis; L-isoleucine biosynthesis; L-isoleucine from 2-oxobutanoate: step 2/4. The protein operates within amino-acid biosynthesis; L-valine biosynthesis; L-valine from pyruvate: step 2/4. In terms of biological role, involved in the biosynthesis of branched-chain amino acids (BCAA). Catalyzes an alkyl-migration followed by a ketol-acid reduction of (S)-2-acetolactate (S2AL) to yield (R)-2,3-dihydroxy-isovalerate. In the isomerase reaction, S2AL is rearranged via a Mg-dependent methyl migration to produce 3-hydroxy-3-methyl-2-ketobutyrate (HMKB). In the reductase reaction, this 2-ketoacid undergoes a metal-dependent reduction by NADPH to yield (R)-2,3-dihydroxy-isovalerate. This is Ketol-acid reductoisomerase (NADP(+)) from Aliarcobacter butzleri (strain RM4018) (Arcobacter butzleri).